Consider the following 209-residue polypeptide: Large ribosomal subunit protein uL3 (209 aa).

The segment at 126 to 148 (HGQSRGPMAHGSRYHRRPGSMGP) is disordered.

Belongs to the universal ribosomal protein uL3 family. In terms of assembly, part of the 50S ribosomal subunit. Forms a cluster with proteins L14 and L19.

One of the primary rRNA binding proteins, it binds directly near the 3'-end of the 23S rRNA, where it nucleates assembly of the 50S subunit. The sequence is that of Large ribosomal subunit protein uL3 from Listeria monocytogenes serotype 4b (strain CLIP80459).